We begin with the raw amino-acid sequence, 435 residues long: GTPase Der (435 aa).

EngA-type G domains lie at 4–167 (KIVA…SKND) and 175–350 (TKIA…QSLS). Residues 10-17 (GKPNVGKS), 57-61 (DTGGI), 119-122 (NKYD), 181-188 (GKPNVGKS), 228-232 (DTAGI), and 293-296 (NKWD) each bind GTP. The region spanning 351-435 (VKVKTYVLNE…PINLIFRERK (85 aa)) is the KH-like domain.

This sequence belongs to the TRAFAC class TrmE-Era-EngA-EngB-Septin-like GTPase superfamily. EngA (Der) GTPase family. Associates with the 50S ribosomal subunit.

In terms of biological role, GTPase that plays an essential role in the late steps of ribosome biogenesis. The polypeptide is GTPase Der (Mycoplasma capricolum subsp. capricolum (strain California kid / ATCC 27343 / NCTC 10154)).